The sequence spans 256 residues: Small ribosomal subunit protein eS1 (256 aa).

A compositionally biased stretch (basic residues) spans 1-18 (MAVGKNKRLSKGKKGLKK). Residues 1–20 (MAVGKNKRLSKGKKGLKKKA) form a disordered region. Alanine 2 bears the N-acetylalanine; partial mark.

It belongs to the eukaryotic ribosomal protein eS1 family. Component of the small ribosomal subunit. Mature ribosomes consist of a small (40S) and a large (60S) subunit. The 40S subunit contains about 33 different proteins and 1 molecule of RNA (18S). The 60S subunit contains about 49 different proteins and 3 molecules of RNA (25S, 5.8S and 5S).

The protein localises to the cytoplasm. This Chaetomium globosum (strain ATCC 6205 / CBS 148.51 / DSM 1962 / NBRC 6347 / NRRL 1970) (Soil fungus) protein is Small ribosomal subunit protein eS1.